A 93-amino-acid chain; its full sequence is Small ribosomal subunit protein uS19 (93 aa).

Belongs to the universal ribosomal protein uS19 family.

Protein S19 forms a complex with S13 that binds strongly to the 16S ribosomal RNA. The polypeptide is Small ribosomal subunit protein uS19 (Streptococcus gordonii (strain Challis / ATCC 35105 / BCRC 15272 / CH1 / DL1 / V288)).